Here is a 320-residue protein sequence, read N- to C-terminus: Aspartate carbamoyltransferase catalytic subunit (320 aa).

Carbamoyl phosphate contacts are provided by arginine 58 and threonine 59. Residue lysine 86 coordinates L-aspartate. The carbamoyl phosphate site is built by arginine 108, histidine 136, and glutamine 139. Arginine 169 and arginine 223 together coordinate L-aspartate. The carbamoyl phosphate site is built by glycine 264 and proline 265.

It belongs to the aspartate/ornithine carbamoyltransferase superfamily. ATCase family. Heterododecamer (2C3:3R2) of six catalytic PyrB chains organized as two trimers (C3), and six regulatory PyrI chains organized as three dimers (R2).

It catalyses the reaction carbamoyl phosphate + L-aspartate = N-carbamoyl-L-aspartate + phosphate + H(+). It functions in the pathway pyrimidine metabolism; UMP biosynthesis via de novo pathway; (S)-dihydroorotate from bicarbonate: step 2/3. Catalyzes the condensation of carbamoyl phosphate and aspartate to form carbamoyl aspartate and inorganic phosphate, the committed step in the de novo pyrimidine nucleotide biosynthesis pathway. This chain is Aspartate carbamoyltransferase catalytic subunit, found in Cereibacter sphaeroides (strain ATCC 17029 / ATH 2.4.9) (Rhodobacter sphaeroides).